A 118-amino-acid polypeptide reads, in one-letter code: Large ribosomal subunit protein uL18 (118 aa).

The protein belongs to the universal ribosomal protein uL18 family. Part of the 50S ribosomal subunit; part of the 5S rRNA/L5/L18/L25 subcomplex. Contacts the 5S and 23S rRNAs.

Its function is as follows. This is one of the proteins that bind and probably mediate the attachment of the 5S RNA into the large ribosomal subunit, where it forms part of the central protuberance. The sequence is that of Large ribosomal subunit protein uL18 from Rickettsia felis (strain ATCC VR-1525 / URRWXCal2) (Rickettsia azadi).